The primary structure comprises 121 residues: Small ribosomal subunit protein uS13 (121 aa).

The interval Lys-93 to Lys-121 is disordered.

Belongs to the universal ribosomal protein uS13 family. Part of the 30S ribosomal subunit. Forms a loose heterodimer with protein S19. Forms two bridges to the 50S subunit in the 70S ribosome.

Located at the top of the head of the 30S subunit, it contacts several helices of the 16S rRNA. In the 70S ribosome it contacts the 23S rRNA (bridge B1a) and protein L5 of the 50S subunit (bridge B1b), connecting the 2 subunits; these bridges are implicated in subunit movement. Contacts the tRNAs in the A and P-sites. The chain is Small ribosomal subunit protein uS13 from Clostridium perfringens (strain ATCC 13124 / DSM 756 / JCM 1290 / NCIMB 6125 / NCTC 8237 / Type A).